The sequence spans 330 residues: Biotin synthase (330 aa).

A Radical SAM core domain is found at Tyr-42–Ala-268. Positions 60, 64, and 67 each coordinate [4Fe-4S] cluster. The [2Fe-2S] cluster site is built by Cys-103, Cys-136, Cys-196, and Arg-266.

The protein belongs to the radical SAM superfamily. Biotin synthase family. In terms of assembly, homodimer. Requires [4Fe-4S] cluster as cofactor. The cofactor is [2Fe-2S] cluster.

It carries out the reaction (4R,5S)-dethiobiotin + (sulfur carrier)-SH + 2 reduced [2Fe-2S]-[ferredoxin] + 2 S-adenosyl-L-methionine = (sulfur carrier)-H + biotin + 2 5'-deoxyadenosine + 2 L-methionine + 2 oxidized [2Fe-2S]-[ferredoxin]. The protein operates within cofactor biosynthesis; biotin biosynthesis; biotin from 7,8-diaminononanoate: step 2/2. In terms of biological role, catalyzes the conversion of dethiobiotin (DTB) to biotin by the insertion of a sulfur atom into dethiobiotin via a radical-based mechanism. In Macrococcus caseolyticus (strain JCSC5402) (Macrococcoides caseolyticum), this protein is Biotin synthase.